Here is a 312-residue protein sequence, read N- to C-terminus: Putative olfactory receptor 1F2 (312 aa).

Topologically, residues 1 to 25 (MERDKPVSVSEFLLLGLSRQPQQQH) are extracellular. Residues 26 to 49 (LLFVFFLSMYLATVLGNLLIILAI) form a helical membrane-spanning segment. The Cytoplasmic portion of the chain corresponds to 50–57 (SIDSRLHT). Residues 58-78 (PMYFFLSNMSFVDNCFSTTVP) traverse the membrane as a helical segment. The Extracellular segment spans residues 79–99 (KMLANHILRTQTISFSGCLMQ). A disulfide bond links Cys-96 and Cys-188. A helical transmembrane segment spans residues 100–119 (MYFISELADMDNFLLAVMAY). Residues 120–138 (DRFVAVCRPLHYTAKMIHQ) are Cytoplasmic-facing. The helical transmembrane segment at 139 to 157 (LCALLVTGSWVVANSNALL) threads the bilayer. Topologically, residues 158–195 (HTLLMARLSFCADNTIPHIFCDVTPLLKLSCSDTHLSE) are extracellular. The helical transmembrane segment at 196–218 (VMILTEAALVTITPFLCLLASYM) threads the bilayer. Over 219-235 (HITCVVLRVPSTKGRWK) the chain is Cytoplasmic. A helical transmembrane segment spans residues 236–258 (AFSTCGSHLAVVLLFYGTIMSPY). Topologically, residues 259-271 (FRTSSSHSAQRDI) are extracellular. A helical transmembrane segment spans residues 272 to 291 (AAAVRFTVVTPVMNPLIYSL). Over 292–312 (RNKDIKGALVKVVAVKFFSVQ) the chain is Cytoplasmic.

The protein belongs to the G-protein coupled receptor 1 family.

Its subcellular location is the cell membrane. Its function is as follows. Odorant receptor. The protein is Putative olfactory receptor 1F2 (OR1F2P) of Homo sapiens (Human).